The following is a 307-amino-acid chain: Coproporphyrin III ferrochelatase (307 aa).

Fe-coproporphyrin III-binding positions include Tyr12, Arg29, 45 to 46 (RY), Ser53, and Tyr124. Positions 181 and 263 each coordinate Fe(2+).

It belongs to the ferrochelatase family.

Its subcellular location is the cytoplasm. The enzyme catalyses Fe-coproporphyrin III + 2 H(+) = coproporphyrin III + Fe(2+). It functions in the pathway porphyrin-containing compound metabolism; protoheme biosynthesis. Its function is as follows. Involved in coproporphyrin-dependent heme b biosynthesis. Catalyzes the insertion of ferrous iron into coproporphyrin III to form Fe-coproporphyrin III. The chain is Coproporphyrin III ferrochelatase from Staphylococcus aureus (strain COL).